The following is a 357-amino-acid chain: Isopentenyl-diphosphate delta-isomerase (357 aa).

12 to 13 (RK) contributes to the substrate binding site. FMN is bound by residues serine 70, 71–73 (SMT), serine 101, and asparagine 130. 101–103 (SMR) provides a ligand contact to substrate. Glutamine 165 serves as a coordination point for substrate. Glutamate 166 contacts Mg(2+). Residues lysine 197 and 310–311 (AR) each bind FMN.

Belongs to the IPP isomerase type 2 family. In terms of assembly, homooctamer. Dimer of tetramers. Requires FMN as cofactor. It depends on NADPH as a cofactor. Mg(2+) is required as a cofactor.

It is found in the cytoplasm. It catalyses the reaction isopentenyl diphosphate = dimethylallyl diphosphate. Involved in the biosynthesis of isoprenoids. Catalyzes the 1,3-allylic rearrangement of the homoallylic substrate isopentenyl (IPP) to its allylic isomer, dimethylallyl diphosphate (DMAPP). The chain is Isopentenyl-diphosphate delta-isomerase from Pelodictyon phaeoclathratiforme (strain DSM 5477 / BU-1).